The primary structure comprises 493 residues: MDRFILSLDEGTTSARAIIFDRESNVLGVGQYEFPQHYPRPGWVEHDPNEIWEAQFRAIKTAIERAKIEPTQIAAIGVTNQRETTIVWDKSGKPLHNAIVWQCRRTAEMVEEIKREYSEVIKEKTGLVPDAYFSASKLKWLLDNVPGLREKAEKGEVLFGTVDTFLIYRLTGEHVTDYSNASRTMLFNIKKLEWDDELLEIFGVPEGVLPEVKESSEIYGYTKKELLGAEIPVSGDAGDQQAALFGQAAFETGMVKATYGTGNFILANTGKTVRYSDNLLTTVAWGLNGKVSYALEGSVFITGAAVQWLRDGIKIIKSAPETEELARKLQSNEGVYFVPAFVGLGAPYWDQFARGLIIGITRGTGREHLARATLEAIAYLTRDVVEEMERLVGIKELRVDGGATANDFLMQFQADILNRRVVRPVVKETTALGAAYLAGLAVDYWEGLEEIKSLWKAEKVFGPVMDEETRRKLYRGWKEAVKRAMGWAKVVDA.

Residue Thr-12 participates in ADP binding. Residues Thr-12, Thr-13, and Ser-14 each contribute to the ATP site. Sn-glycerol 3-phosphate is bound at residue Thr-12. An ADP-binding site is contributed by Arg-16. Positions 82, 83, 132, and 239 each coordinate sn-glycerol 3-phosphate. Positions 82, 83, 132, 239, and 240 each coordinate glycerol. ADP is bound by residues Thr-261 and Gly-303. ATP is bound by residues Thr-261, Gly-303, Gln-307, and Gly-402. Gly-402 and Asn-406 together coordinate ADP.

Belongs to the FGGY kinase family.

The enzyme catalyses glycerol + ATP = sn-glycerol 3-phosphate + ADP + H(+). It functions in the pathway polyol metabolism; glycerol degradation via glycerol kinase pathway; sn-glycerol 3-phosphate from glycerol: step 1/1. Its function is as follows. Key enzyme in the regulation of glycerol uptake and metabolism. Catalyzes the phosphorylation of glycerol to yield sn-glycerol 3-phosphate. This Thermococcus onnurineus (strain NA1) protein is Glycerol kinase.